The following is a 66-amino-acid chain: Large ribosomal subunit protein uL29 (66 aa).

The protein belongs to the universal ribosomal protein uL29 family.

The chain is Large ribosomal subunit protein uL29 from Helicobacter pylori (strain HPAG1).